The sequence spans 264 residues: 3-methyl-2-oxobutanoate hydroxymethyltransferase (264 aa).

Mg(2+) is bound by residues aspartate 46 and aspartate 85. 3-methyl-2-oxobutanoate contacts are provided by residues 46–47 (DS), aspartate 85, and lysine 113. Glutamate 115 is a Mg(2+) binding site. Glutamate 181 serves as the catalytic Proton acceptor.

It belongs to the PanB family. As to quaternary structure, homodecamer; pentamer of dimers. Mg(2+) serves as cofactor.

Its subcellular location is the cytoplasm. The catalysed reaction is 3-methyl-2-oxobutanoate + (6R)-5,10-methylene-5,6,7,8-tetrahydrofolate + H2O = 2-dehydropantoate + (6S)-5,6,7,8-tetrahydrofolate. It participates in cofactor biosynthesis; (R)-pantothenate biosynthesis; (R)-pantoate from 3-methyl-2-oxobutanoate: step 1/2. Functionally, catalyzes the reversible reaction in which hydroxymethyl group from 5,10-methylenetetrahydrofolate is transferred onto alpha-ketoisovalerate to form ketopantoate. The sequence is that of 3-methyl-2-oxobutanoate hydroxymethyltransferase from Salmonella typhi.